A 131-amino-acid chain; its full sequence is Fumarate reductase subunit C (131 aa).

3 helical membrane passes run Glu30–Leu50, Ile61–Leu81, and Ile110–Phe130.

This sequence belongs to the FrdC family. Part of an enzyme complex containing four subunits: a flavoprotein (FrdA), an iron-sulfur protein (FrdB), and two hydrophobic anchor proteins (FrdC and FrdD).

The protein localises to the cell inner membrane. Two distinct, membrane-bound, FAD-containing enzymes are responsible for the catalysis of fumarate and succinate interconversion; fumarate reductase is used in anaerobic growth, and succinate dehydrogenase is used in aerobic growth. Anchors the catalytic components of the fumarate reductase complex to the cell inner membrane, binds quinones. The protein is Fumarate reductase subunit C of Klebsiella pneumoniae subsp. pneumoniae (strain ATCC 700721 / MGH 78578).